Consider the following 71-residue polypeptide: Small ribosomal subunit protein bS21 (71 aa).

It belongs to the bacterial ribosomal protein bS21 family.

The protein is Small ribosomal subunit protein bS21 of Acinetobacter baylyi (strain ATCC 33305 / BD413 / ADP1).